We begin with the raw amino-acid sequence, 328 residues long: Acetaldehyde dehydrogenase 3 (328 aa).

NAD(+) is bound at residue 17–20 (SGNI). The Acyl-thioester intermediate role is filled by cysteine 135. Residues 166-174 (SAGPGTRAN) and asparagine 298 each bind NAD(+).

This sequence belongs to the acetaldehyde dehydrogenase family.

The catalysed reaction is acetaldehyde + NAD(+) + CoA = acetyl-CoA + NADH + H(+). This is Acetaldehyde dehydrogenase 3 from Nocardia farcinica (strain IFM 10152).